A 671-amino-acid chain; its full sequence is DNA ligase (671 aa).

NAD(+)-binding positions include 32–36, 81–82, and Glu-113; these read DAEYD and SL. Catalysis depends on Lys-115, which acts as the N6-AMP-lysine intermediate. Residues Arg-136, Glu-173, Lys-290, and Lys-314 each coordinate NAD(+). Zn(2+)-binding residues include Cys-408, Cys-411, Cys-426, and Cys-432. A BRCT domain is found at 593–671; the sequence is EIDSPFAGKT…EAEMIRLLGA (79 aa).

Belongs to the NAD-dependent DNA ligase family. LigA subfamily. Requires Mg(2+) as cofactor. Mn(2+) is required as a cofactor.

It catalyses the reaction NAD(+) + (deoxyribonucleotide)n-3'-hydroxyl + 5'-phospho-(deoxyribonucleotide)m = (deoxyribonucleotide)n+m + AMP + beta-nicotinamide D-nucleotide.. In terms of biological role, DNA ligase that catalyzes the formation of phosphodiester linkages between 5'-phosphoryl and 3'-hydroxyl groups in double-stranded DNA using NAD as a coenzyme and as the energy source for the reaction. It is essential for DNA replication and repair of damaged DNA. In Salmonella paratyphi C (strain RKS4594), this protein is DNA ligase.